The sequence spans 195 residues: CASP-like protein Os03g0196400 (195 aa).

The Cytoplasmic portion of the chain corresponds to 1–38; it reads MRQQQAGGVGDGVSPGNVPVCYYGPGGRVPSSLERRAR. A helical transmembrane segment spans residues 39 to 59; that stretch reads AAEVLLRCAACGLAVLAAALL. Residues 60–81 are Extracellular-facing; sequence GADRQTRVFFSIQKVARYTDMQ. The helical transmembrane segment at 82 to 102 threads the bilayer; that stretch reads SLVLLVIANGMAACYSLIQCA. The Cytoplasmic portion of the chain corresponds to 103–104; it reads RC. Residues 105-125 traverse the membrane as a helical segment; it reads LVMAYIVISAVAAAMEAALIG. At 126-150 the chain is on the extracellular side; sequence KYGQPEFQWMKTCHLYKRFCAQAGG. The helical transmembrane segment at 151-171 threads the bilayer; sequence GVACAIAASVNMVGVALISAF. Residues 172–195 lie on the Cytoplasmic side of the membrane; it reads NLFRLYGNSNGGGKATTTTMAGGK.

It belongs to the Casparian strip membrane proteins (CASP) family. In terms of assembly, homodimer and heterodimers.

The protein localises to the cell membrane. This chain is CASP-like protein Os03g0196400, found in Oryza sativa subsp. japonica (Rice).